The primary structure comprises 293 residues: Acetyl-coenzyme A carboxylase carboxyl transferase subunit beta (293 aa).

Residues 29 to 293 (LWSKCPECGL…GCRPMEITSA (265 aa)) form the CoA carboxyltransferase N-terminal domain. The Zn(2+) site is built by C33, C36, C52, and C55. Residues 33–55 (CPECGLVVYVKDLKGNASVCAGC) form a C4-type zinc finger.

It belongs to the AccD/PCCB family. Acetyl-CoA carboxylase is a heterohexamer composed of biotin carboxyl carrier protein (AccB), biotin carboxylase (AccC) and two subunits each of ACCase subunit alpha (AccA) and ACCase subunit beta (AccD). Zn(2+) serves as cofactor.

Its subcellular location is the cytoplasm. It catalyses the reaction N(6)-carboxybiotinyl-L-lysyl-[protein] + acetyl-CoA = N(6)-biotinyl-L-lysyl-[protein] + malonyl-CoA. Its pathway is lipid metabolism; malonyl-CoA biosynthesis; malonyl-CoA from acetyl-CoA: step 1/1. Component of the acetyl coenzyme A carboxylase (ACC) complex. Biotin carboxylase (BC) catalyzes the carboxylation of biotin on its carrier protein (BCCP) and then the CO(2) group is transferred by the transcarboxylase to acetyl-CoA to form malonyl-CoA. This Parasynechococcus marenigrum (strain WH8102) protein is Acetyl-coenzyme A carboxylase carboxyl transferase subunit beta.